Consider the following 43-residue polypeptide: Protein PsbN (43 aa).

The helical transmembrane segment at 7-29 (LSIALAAVCIGVTGYSIYLSFGP) threads the bilayer.

This sequence belongs to the PsbN family.

The protein localises to the cellular thylakoid membrane. Functionally, may play a role in photosystem I and II biogenesis. This chain is Protein PsbN, found in Thermosynechococcus vestitus (strain NIES-2133 / IAM M-273 / BP-1).